The primary structure comprises 138 residues: Putative pre-16S rRNA nuclease (138 aa).

The protein belongs to the YqgF nuclease family.

It localises to the cytoplasm. Its function is as follows. Could be a nuclease involved in processing of the 5'-end of pre-16S rRNA. This chain is Putative pre-16S rRNA nuclease, found in Porphyromonas gingivalis (strain ATCC BAA-308 / W83).